A 1132-amino-acid chain; its full sequence is Telomerase reverse transcriptase (1132 aa).

A disordered region spans residues Met1 to Asn66. Polar residues-rich tracts occupy residues Ser9 to Thr26 and Gln45 to Arg55. Residues Lys602–Ile956 form the Reverse transcriptase domain. Positions 708, 886, and 887 each coordinate Mg(2+).

The protein belongs to the reverse transcriptase family. Telomerase subfamily.

Its subcellular location is the nucleus. It is found in the chromosome. The protein localises to the telomere. It carries out the reaction DNA(n) + a 2'-deoxyribonucleoside 5'-triphosphate = DNA(n+1) + diphosphate. Telomerase is a ribonucleoprotein enzyme essential for the replication of chromosome termini in most eukaryotes. It elongates telomeres. It is a reverse transcriptase that adds simple sequence repeats to chromosome ends by copying a template sequence within the RNA component of the enzyme. The polypeptide is Telomerase reverse transcriptase (TERT) (Oxytricha trifallax (Sterkiella histriomuscorum)).